Consider the following 342-residue polypeptide: Isopentenyl-diphosphate delta-isomerase (342 aa).

11 to 12 provides a ligand contact to substrate; sequence RK. Residues Ser-68, 69 to 71, Ser-99, and Asn-127 each bind FMN; that span reads SMT. 99–101 contributes to the substrate binding site; the sequence is SMR. A Mg(2+)-binding site is contributed by Glu-163. Residues Lys-194, Thr-224, and 295-296 each bind FMN; that span reads AG.

It belongs to the IPP isomerase type 2 family. In terms of assembly, homooctamer. Dimer of tetramers. It depends on FMN as a cofactor. NADPH is required as a cofactor. Requires Mg(2+) as cofactor.

Its subcellular location is the cytoplasm. It catalyses the reaction isopentenyl diphosphate = dimethylallyl diphosphate. Functionally, involved in the biosynthesis of isoprenoids. Catalyzes the 1,3-allylic rearrangement of the homoallylic substrate isopentenyl (IPP) to its allylic isomer, dimethylallyl diphosphate (DMAPP). The chain is Isopentenyl-diphosphate delta-isomerase from Rickettsia typhi (strain ATCC VR-144 / Wilmington).